Here is a 123-residue protein sequence, read N- to C-terminus: Fluoride-specific ion channel FluC (123 aa).

4 helical membrane passes run 3–23 (IAWVALGGAIGAVARYVLSNA), 34–54 (WGTLSVNLLGSFIMGLLFYLF), 67–87 (LVLVGGLGAFTTFSTFSLETL), and 99–119 (LLNMLSSVLLCVLAAYLGLVV). Na(+)-binding residues include G74 and T77.

The protein belongs to the fluoride channel Fluc/FEX (TC 1.A.43) family.

It localises to the cell inner membrane. The catalysed reaction is fluoride(in) = fluoride(out). Na(+) is not transported, but it plays an essential structural role and its presence is essential for fluoride channel function. In terms of biological role, fluoride-specific ion channel. Important for reducing fluoride concentration in the cell, thus reducing its toxicity. The polypeptide is Fluoride-specific ion channel FluC (Magnetococcus marinus (strain ATCC BAA-1437 / JCM 17883 / MC-1)).